The following is a 243-amino-acid chain: Coproheme decarboxylase (243 aa).

Residue Y145 is part of the active site. H168 provides a ligand contact to Fe-coproporphyrin III.

Belongs to the ChdC family. Type 2 subfamily. It depends on Fe-coproporphyrin III as a cofactor.

The catalysed reaction is Fe-coproporphyrin III + 2 H2O2 + 2 H(+) = heme b + 2 CO2 + 4 H2O. It carries out the reaction Fe-coproporphyrin III + H2O2 + H(+) = harderoheme III + CO2 + 2 H2O. It catalyses the reaction harderoheme III + H2O2 + H(+) = heme b + CO2 + 2 H2O. Its pathway is porphyrin-containing compound metabolism; protoheme biosynthesis. Functionally, involved in coproporphyrin-dependent heme b biosynthesis. Catalyzes the decarboxylation of Fe-coproporphyrin III (coproheme) to heme b (protoheme IX), the last step of the pathway. The reaction occurs in a stepwise manner with a three-propionate intermediate. The sequence is that of Coproheme decarboxylase from Streptomyces coelicolor (strain ATCC BAA-471 / A3(2) / M145).